Here is a 439-residue protein sequence, read N- to C-terminus: tRNA modification GTPase MnmE (439 aa).

3 residues coordinate (6S)-5-formyl-5,6,7,8-tetrahydrofolate: Arg26, Glu88, and Arg127. Residues 220-367 (GARLALIGRP…LRDAIHTALI (148 aa)) enclose the TrmE-type G domain. Asn230 provides a ligand contact to K(+). GTP-binding positions include 230–235 (NAGKSS), 249–255 (TPIPGTT), and 274–277 (DTAG). Ser234 contributes to the Mg(2+) binding site. K(+) is bound by residues Thr249, Ile251, and Thr254. Thr255 serves as a coordination point for Mg(2+). Residue Lys439 coordinates (6S)-5-formyl-5,6,7,8-tetrahydrofolate.

It belongs to the TRAFAC class TrmE-Era-EngA-EngB-Septin-like GTPase superfamily. TrmE GTPase family. In terms of assembly, homodimer. Heterotetramer of two MnmE and two MnmG subunits. The cofactor is K(+).

The protein resides in the cytoplasm. Its function is as follows. Exhibits a very high intrinsic GTPase hydrolysis rate. Involved in the addition of a carboxymethylaminomethyl (cmnm) group at the wobble position (U34) of certain tRNAs, forming tRNA-cmnm(5)s(2)U34. The protein is tRNA modification GTPase MnmE of Deinococcus geothermalis (strain DSM 11300 / CIP 105573 / AG-3a).